Here is a 740-residue protein sequence, read N- to C-terminus: Phosphoribosylformylglycinamidine synthase subunit PurL (740 aa).

Residue His55 is part of the active site. Residues Tyr58 and Lys97 each contribute to the ATP site. Residue Glu99 participates in Mg(2+) binding. Residues 100–103 and Arg122 contribute to the substrate site; that span reads SHNH. His101 acts as the Proton acceptor in catalysis. Asp123 contacts Mg(2+). Residue Gln246 coordinates substrate. Position 276 (Asp276) interacts with Mg(2+). 320 to 322 provides a ligand contact to substrate; sequence ESQ. The ATP site is built by Asp501 and Gly538. Asn539 contributes to the Mg(2+) binding site. A substrate-binding site is contributed by Ser541.

It belongs to the FGAMS family. As to quaternary structure, monomer. Part of the FGAM synthase complex composed of 1 PurL, 1 PurQ and 2 PurS subunits.

It is found in the cytoplasm. The catalysed reaction is N(2)-formyl-N(1)-(5-phospho-beta-D-ribosyl)glycinamide + L-glutamine + ATP + H2O = 2-formamido-N(1)-(5-O-phospho-beta-D-ribosyl)acetamidine + L-glutamate + ADP + phosphate + H(+). The protein operates within purine metabolism; IMP biosynthesis via de novo pathway; 5-amino-1-(5-phospho-D-ribosyl)imidazole from N(2)-formyl-N(1)-(5-phospho-D-ribosyl)glycinamide: step 1/2. Part of the phosphoribosylformylglycinamidine synthase complex involved in the purines biosynthetic pathway. Catalyzes the ATP-dependent conversion of formylglycinamide ribonucleotide (FGAR) and glutamine to yield formylglycinamidine ribonucleotide (FGAM) and glutamate. The FGAM synthase complex is composed of three subunits. PurQ produces an ammonia molecule by converting glutamine to glutamate. PurL transfers the ammonia molecule to FGAR to form FGAM in an ATP-dependent manner. PurS interacts with PurQ and PurL and is thought to assist in the transfer of the ammonia molecule from PurQ to PurL. This is Phosphoribosylformylglycinamidine synthase subunit PurL from Lacticaseibacillus casei (Lactobacillus casei).